Here is a 957-residue protein sequence, read N- to C-terminus: Glycine dehydrogenase (decarboxylating) (957 aa).

Lys-708 is modified (N6-(pyridoxal phosphate)lysine).

It belongs to the GcvP family. The glycine cleavage system is composed of four proteins: P, T, L and H. Pyridoxal 5'-phosphate is required as a cofactor.

The catalysed reaction is N(6)-[(R)-lipoyl]-L-lysyl-[glycine-cleavage complex H protein] + glycine + H(+) = N(6)-[(R)-S(8)-aminomethyldihydrolipoyl]-L-lysyl-[glycine-cleavage complex H protein] + CO2. The glycine cleavage system catalyzes the degradation of glycine. The P protein binds the alpha-amino group of glycine through its pyridoxal phosphate cofactor; CO(2) is released and the remaining methylamine moiety is then transferred to the lipoamide cofactor of the H protein. This is Glycine dehydrogenase (decarboxylating) from Salmonella arizonae (strain ATCC BAA-731 / CDC346-86 / RSK2980).